A 339-amino-acid chain; its full sequence is Glyceraldehyde-3-phosphate dehydrogenase (339 aa).

NAD(+)-binding positions include 11–12 (TI) and glycine 110. Position 139-141 (139-141 (SCN)) interacts with D-glyceraldehyde 3-phosphate. The active-site Nucleophile is cysteine 140. Arginine 168 is an NAD(+) binding site. D-glyceraldehyde 3-phosphate is bound at residue 194–195 (HG). Glutamine 301 is an NAD(+) binding site.

The protein belongs to the glyceraldehyde-3-phosphate dehydrogenase family. Homotetramer.

It is found in the cytoplasm. The catalysed reaction is D-glyceraldehyde 3-phosphate + phosphate + NADP(+) = (2R)-3-phospho-glyceroyl phosphate + NADPH + H(+). It carries out the reaction D-glyceraldehyde 3-phosphate + phosphate + NAD(+) = (2R)-3-phospho-glyceroyl phosphate + NADH + H(+). The protein operates within carbohydrate degradation; glycolysis; pyruvate from D-glyceraldehyde 3-phosphate: step 1/5. This Methanospirillum hungatei JF-1 (strain ATCC 27890 / DSM 864 / NBRC 100397 / JF-1) protein is Glyceraldehyde-3-phosphate dehydrogenase.